A 501-amino-acid chain; its full sequence is TGF-beta receptor type-1 (501 aa).

The first 29 residues, 1–29, serve as a signal peptide directing secretion; sequence MEAASAALRRCLLLIVLVAAATLLPGAKA. Residues 30-124 lie on the Extracellular side of the membrane; that stretch reads LQCFCHLCTK…QSAGLGPVEL (95 aa). Intrachain disulfides connect Cys32/Cys50, Cys34/Cys37, Cys44/Cys67, Cys82/Cys94, and Cys95/Cys100. N-linked (GlcNAc...) asparagine glycosylation occurs at Asn41. Residues 125–145 traverse the membrane as a helical segment; that stretch reads AAVIAGPVCFVCIALMLMVYI. At 146-501 the chain is on the cytoplasmic side; it reads CHNRTVIHHR…QLSQQEGIKM (356 aa). The residue at position 163 (Ser163) is a Phosphoserine. One can recognise a GS domain in the interval 173–202; that stretch reads TTLKDLIYDMTTSGSGSGLPLLVQRTIART. Residues Thr183 and Thr184 each carry the phosphothreonine; by TGFBR2 modification. Phosphoserine; by TGFBR2 occurs at positions 185, 187, and 189. The short motif at 191 to 192 is the FKBP1A-binding element; the sequence is LP. The Protein kinase domain occupies 203–493; the sequence is IVLQESIGKG…LRIKKTLSQL (291 aa). ATP-binding positions include 209–217 and Lys230; that span reads IGKGRFGEV. Residue Asp331 is the Proton acceptor of the active site. Lys389 is covalently cross-linked (Glycyl lysine isopeptide (Lys-Gly) (interchain with G-Cter in SUMO)).

This sequence belongs to the protein kinase superfamily. TKL Ser/Thr protein kinase family. TGFB receptor subfamily. As to quaternary structure, homodimer; in the endoplasmic reticulum but also at the cell membrane. Heterohexamer; TGFB1, TGFB2 and TGFB3 homodimeric ligands assemble a functional receptor composed of two TGFBR1 and TGFBR2 heterodimers to form a ligand-receptor heterohexamer. The respective affinity of TGBRB1 and TGFBR2 for the ligands may modulate the kinetics of assembly of the receptor and may explain the different biological activities of TGFB1, TGFB2 and TGFB3. Component of a complex composed of TSC22D1 (via N-terminus), TGFBR1 and TGFBR2; the interaction between TSC22D1 and TGFBR1 is inhibited by SMAD7 and promoted by TGFB1. Interacts with CD109; inhibits TGF-beta receptor activation in keratinocytes. Interacts with RBPMS. Interacts with SMAD2, SMAD3 and ZFYVE9; ZFYVE9 recruits SMAD2 and SMAD3 to the TGF-beta receptor. Interacts with TRAF6 and MAP3K7; induces MAP3K7 activation by TRAF6. Interacts with PARD6A; involved in TGF-beta induced epithelial to mesenchymal transition. Interacts with NEDD4L. Interacts with SMAD7, SMURF1 and SMURF2; SMAD7 recruits NEDD4L, SMURF1 and SMURF2 to the TGF-beta receptor. Interacts with USP15 and VPS39. Interacts (unphosphorylated) with FKBP1A; prevents TGFBR1 phosphorylation by TGFBR2 and stabilizes it in the inactive conformation. Interacts with SDCBP (via C-terminus). Interacts with CAV1 and this interaction is impaired in the presence of SDCBP. Interacts with APPL1; interaction is TGF beta dependent; mediates trafficking of the TGFBR1 from the endosomes to the nucleus via microtubules in a TRAF6-dependent manner. Interacts with GPR50; this interaction promotes the constitutive activation of SMAD signaling pathway. It depends on Mg(2+) as a cofactor. The cofactor is Mn(2+). In terms of processing, phosphorylated at basal levels in the absence of ligand. Activated upon phosphorylation by TGFBR2, mainly in the GS domain. Phosphorylation in the GS domain abrogates FKBP1A-binding. Post-translationally, N-Glycosylated. Ubiquitinated; undergoes ubiquitination catalyzed by several E3 ubiquitin ligases including SMURF1, SMURF2 and NEDD4L2. Results in the proteasomal and/or lysosomal degradation of the receptor thereby negatively regulating its activity. Deubiquitinated by USP15, leading to stabilization of the protein and enhanced TGF-beta signal. Its ubiquitination and proteasome-mediated degradation is negatively regulated by SDCBP. Urogenital ridge, testis, ovary, brain and lungs.

The protein localises to the cell membrane. It is found in the cell junction. It localises to the tight junction. Its subcellular location is the membrane raft. The protein resides in the cell surface. The enzyme catalyses L-threonyl-[receptor-protein] + ATP = O-phospho-L-threonyl-[receptor-protein] + ADP + H(+). It catalyses the reaction L-seryl-[receptor-protein] + ATP = O-phospho-L-seryl-[receptor-protein] + ADP + H(+). Kept in an inactive conformation by FKBP1A preventing receptor activation in absence of ligand. CD109 is another inhibitor of the receptor. Functionally, transmembrane serine/threonine kinase forming with the TGF-beta type II serine/threonine kinase receptor, TGFBR2, the non-promiscuous receptor for the TGF-beta cytokines TGFB1, TGFB2 and TGFB3. Transduces the TGFB1, TGFB2 and TGFB3 signal from the cell surface to the cytoplasm and is thus regulating a plethora of physiological and pathological processes including cell cycle arrest in epithelial and hematopoietic cells, control of mesenchymal cell proliferation and differentiation, wound healing, extracellular matrix production, immunosuppression and carcinogenesis. The formation of the receptor complex composed of 2 TGFBR1 and 2 TGFBR2 molecules symmetrically bound to the cytokine dimer results in the phosphorylation and the activation of TGFBR1 by the constitutively active TGFBR2. Activated TGFBR1 phosphorylates SMAD2 which dissociates from the receptor and interacts with SMAD4. The SMAD2-SMAD4 complex is subsequently translocated to the nucleus where it modulates the transcription of the TGF-beta-regulated genes. This constitutes the canonical SMAD-dependent TGF-beta signaling cascade. Also involved in non-canonical, SMAD-independent TGF-beta signaling pathways. For instance, TGFBR1 induces TRAF6 autoubiquitination which in turn results in MAP3K7 ubiquitination and activation to trigger apoptosis. Also regulates epithelial to mesenchymal transition through a SMAD-independent signaling pathway through PARD6A phosphorylation and activation. This is TGF-beta receptor type-1 (Tgfbr1) from Rattus norvegicus (Rat).